The sequence spans 602 residues: Myotubularin (602 aa).

The interval 1 to 32 (MASNSTPKYNSNSLENSLRRSPGDGMNHEQND) is disordered. Positions 17 to 31 (SLRRSPGDGMNHEQN) are enriched in basic and acidic residues. In terms of domain architecture, GRAM spans 28–96 (HEQNDEIPCL…GVIARIEKMG (69 aa)). The 376-residue stretch at 162–537 (GWAVYDAMTE…RHLELWVNYY (376 aa)) folds into the Myotubularin phosphatase domain. A 1,2-diacyl-sn-glycero-3-phospho-(1D-myo-inositol-3,5-bisphosphate) is bound by residues Asn287, Asn312, and Ile313. Positions 287, 312, and 313 each coordinate a 1,2-diacyl-sn-glycero-3-phospho-(1D-myo-inositol-3-phosphate). Cys374 (phosphocysteine intermediate) is an active-site residue. Residues Ser375, Asp376, Gly377, Trp378, Asp379, Arg380, Lys416, and Arg420 each coordinate a 1,2-diacyl-sn-glycero-3-phospho-(1D-myo-inositol-3,5-bisphosphate). Positions 375, 376, 377, 378, 379, and 380 each coordinate a 1,2-diacyl-sn-glycero-3-phospho-(1D-myo-inositol-3-phosphate). Residue Arg420 coordinates a 1,2-diacyl-sn-glycero-3-phospho-(1D-myo-inositol-3-phosphate). The interval 574–602 (QITNSPKMNSSTTSPSSPSQIMPQVHTPF) is disordered. The span at 583 to 592 (SSTTSPSSPS) shows a compositional bias: low complexity.

Belongs to the protein-tyrosine phosphatase family. Non-receptor class myotubularin subfamily.

It localises to the cytoplasm. The protein localises to the cell membrane. The protein resides in the cell projection. Its subcellular location is the filopodium. It is found in the ruffle. It localises to the late endosome. The protein localises to the myofibril. The protein resides in the sarcomere. The catalysed reaction is a 1,2-diacyl-sn-glycero-3-phospho-(1D-myo-inositol-3-phosphate) + H2O = a 1,2-diacyl-sn-glycero-3-phospho-(1D-myo-inositol) + phosphate. It carries out the reaction a 1,2-diacyl-sn-glycero-3-phospho-(1D-myo-inositol-3,5-bisphosphate) + H2O = a 1,2-diacyl-sn-glycero-3-phospho-(1D-myo-inositol-5-phosphate) + phosphate. The enzyme catalyses 1,2-dioctanoyl-sn-glycero-3-phospho-(1-D-myo-inositol-3-phosphate) + H2O = 1,2-dioctanoyl-sn-glycero-3-phospho-(1D-myo-inositol) + phosphate. It catalyses the reaction 1,2-dioctanoyl-sn-glycero-3-phospho-(1D-myo-inositol-3,5-bisphosphate) + H2O = 1,2-dioctanoyl-sn-glycero-3-phospho-(1D-myo-inositol-5-phosphate) + phosphate. The catalysed reaction is 1,2-dihexadecanoyl-sn-glycero-3-phospho-(1D-myo-inositol-3,5-phosphate) + H2O = 1,2-dihexadecanoyl-sn-glycero-3-phospho-(1D-myo-inositol-5-phosphate) + phosphate. Lipid phosphatase which dephosphorylates phosphatidylinositol 3-monophosphate (PI3P) and phosphatidylinositol 3,5-bisphosphate (PI(3,5)P2). This is Myotubularin (mtm1) from Xenopus tropicalis (Western clawed frog).